The following is a 203-amino-acid chain: Large ribosomal subunit protein bL25 (203 aa).

It belongs to the bacterial ribosomal protein bL25 family. CTC subfamily. Part of the 50S ribosomal subunit; part of the 5S rRNA/L5/L18/L25 subcomplex. Contacts the 5S rRNA. Binds to the 5S rRNA independently of L5 and L18.

This is one of the proteins that binds to the 5S RNA in the ribosome where it forms part of the central protuberance. The sequence is that of Large ribosomal subunit protein bL25 from Rickettsia prowazekii (strain Madrid E).